The primary structure comprises 162 residues: Phosphopantetheine adenylyltransferase (162 aa).

S11 serves as a coordination point for substrate. ATP contacts are provided by residues 11–12 and H19; that span reads SF. Positions 43, 76, and 90 each coordinate substrate. ATP is bound by residues 91–93, E101, and 126–132; these read GLR and HLYISSS.

Belongs to the bacterial CoaD family. Homohexamer. Mg(2+) serves as cofactor.

It is found in the cytoplasm. The enzyme catalyses (R)-4'-phosphopantetheine + ATP + H(+) = 3'-dephospho-CoA + diphosphate. Its pathway is cofactor biosynthesis; coenzyme A biosynthesis; CoA from (R)-pantothenate: step 4/5. Reversibly transfers an adenylyl group from ATP to 4'-phosphopantetheine, yielding dephospho-CoA (dPCoA) and pyrophosphate. This chain is Phosphopantetheine adenylyltransferase, found in Streptococcus pneumoniae (strain Hungary19A-6).